The primary structure comprises 180 residues: KxDL motif-containing protein 1 (180 aa).

Polar residues-rich tracts occupy residues 126-144 and 158-170; these read TTIATSEQSTESCDTSPSI and QAPSDTPSVNGQI. The tract at residues 126–180 is disordered; it reads TTIATSEQSTESCDTSPSIISPAMSQDFEDLSQAPSDTPSVNGQILTDEEVVHED.

This sequence belongs to the KXD1 family. Associates with the BLOC-1 complex.

Its subcellular location is the lysosome membrane. Functionally, as part of a BORC-like complex may play a role in lysosomes movement and localization at the cell periphery. Associated with the cytosolic face of lysosomes, this complex may couple lysosomes to microtubule plus-end-directed kinesin motor. May also be involved in the biogenesis of lysosome-related organelles such as melanosomes. The protein is KxDL motif-containing protein 1 (kxd1) of Xenopus tropicalis (Western clawed frog).